The primary structure comprises 422 residues: Serine--tRNA ligase (422 aa).

L-serine is bound at residue 231 to 233 (TSE). Residue 262 to 264 (RQE) coordinates ATP. Glutamate 285 contributes to the L-serine binding site. 349-352 (EISS) is a binding site for ATP. Position 384 (serine 384) interacts with L-serine.

Belongs to the class-II aminoacyl-tRNA synthetase family. Type-1 seryl-tRNA synthetase subfamily. In terms of assembly, homodimer. The tRNA molecule binds across the dimer.

It is found in the cytoplasm. It catalyses the reaction tRNA(Ser) + L-serine + ATP = L-seryl-tRNA(Ser) + AMP + diphosphate + H(+). The catalysed reaction is tRNA(Sec) + L-serine + ATP = L-seryl-tRNA(Sec) + AMP + diphosphate + H(+). It functions in the pathway aminoacyl-tRNA biosynthesis; selenocysteinyl-tRNA(Sec) biosynthesis; L-seryl-tRNA(Sec) from L-serine and tRNA(Sec): step 1/1. Catalyzes the attachment of serine to tRNA(Ser). Is also able to aminoacylate tRNA(Sec) with serine, to form the misacylated tRNA L-seryl-tRNA(Sec), which will be further converted into selenocysteinyl-tRNA(Sec). The polypeptide is Serine--tRNA ligase (Mycoplasma capricolum subsp. capricolum (strain California kid / ATCC 27343 / NCTC 10154)).